A 444-amino-acid polypeptide reads, in one-letter code: Acyl-CoA 6-desaturase (444 aa).

Residues 1-131 lie on the Cytoplasmic side of the membrane; that stretch reads MGKGGNQGEG…DMNLFKTNHV (131 aa). Positions 18–95 constitute a Cytochrome b5 heme-binding domain; that stretch reads VPTFSWEEIQ…LKPLLIGELA (78 aa). Residues 132-152 form a helical membrane-spanning segment; it reads FFLLLLAHIIALESIAWFTVF. Over 153–157 the chain is Lumenal; sequence YFGNG. Residues 158–178 traverse the membrane as a helical segment; sequence WISTLITAFVLATSQAQAGWL. Topologically, residues 179-264 are cytoplasmic; that stretch reads QHDYGHLSVY…KYLPYNHQHE (86 aa). The Histidine box-1 motif lies at 180–184; the sequence is HDYGH. The Histidine box-2 motif lies at 217 to 221; that stretch reads HFQHH. Residues 265 to 285 traverse the membrane as a helical segment; that stretch reads YFFLIGPPLLIPMYFQYQIIM. The Lumenal segment spans residues 286-305; that stretch reads TMIVHKNWVDLAWAISYYIR. A helical transmembrane segment spans residues 306 to 326; it reads FFITYIPFYGILGALLFLNFI. At 327 to 444 the chain is on the cytoplasmic side; it reads RFLESHWFVW…KLWLDAYLHK (118 aa). The short motif at 382–386 is the Histidine box-3 element; that stretch reads QIEHH.

It belongs to the fatty acid desaturase type 1 family.

It localises to the endoplasmic reticulum membrane. The catalysed reaction is (9Z,12Z)-octadecadienoyl-CoA + 2 Fe(II)-[cytochrome b5] + O2 + 2 H(+) = (6Z,9Z,12Z)-octadecatrienoyl-CoA + 2 Fe(III)-[cytochrome b5] + 2 H2O. The enzyme catalyses (9Z,12Z,15Z)-octadecatrienoyl-CoA + 2 Fe(II)-[cytochrome b5] + O2 + 2 H(+) = (6Z,9Z,12Z,15Z)-octadecatetraenoyl-CoA + 2 Fe(III)-[cytochrome b5] + 2 H2O. It carries out the reaction (9Z,12Z,15Z,18Z,21Z)-tetracosapentaenoyl-CoA + 2 Fe(II)-[cytochrome b5] + O2 + 2 H(+) = (6Z,9Z,12Z,15Z,18Z,21Z)-tetracosahexaenoyl-CoA + 2 Fe(III)-[cytochrome b5] + 2 H2O. It catalyses the reaction (11E)-octadecenoyl-CoA + 2 Fe(II)-[cytochrome b5] + O2 + 2 H(+) = (6Z,11E)-octadecadienoyl-CoA + 2 Fe(III)-[cytochrome b5] + 2 H2O. The catalysed reaction is (11Z,14Z)-eicosadienoyl-CoA + 2 Fe(II)-[cytochrome b5] + O2 + 2 H(+) = (8Z,11Z,14Z)-eicosatrienoyl-CoA + 2 Fe(III)-[cytochrome b5] + 2 H2O. The enzyme catalyses (11Z,14Z,17Z)-eicosatrienoyl-CoA + 2 Fe(II)-[cytochrome b5] + O2 + 2 H(+) = (8Z,11Z,14Z,17Z)-eicosatetraenoyl-CoA + 2 Fe(III)-[cytochrome b5] + 2 H2O. It participates in lipid metabolism; polyunsaturated fatty acid biosynthesis. Functionally, involved in the biosynthesis of highly unsaturated fatty acids (HUFA) from the essential polyunsaturated fatty acids (PUFA) linoleic acid (LA) (18:2n-6) and alpha-linolenic acid (ALA) (18:3n-3) precursors, acting as a fatty acyl-coenzyme A (CoA) desaturase that introduces a cis double bond at carbon 6 of the fatty acyl chain. Catalyzes the first and rate limiting step in this pathway which is the desaturation of LA (18:2n-6) and ALA (18:3n-3) into gamma-linoleate (GLA) (18:3n-6) and stearidonate (18:4n-3), respectively. Subsequently, in the biosynthetic pathway of HUFA n-3 series, it desaturates tetracosapentaenoate (24:5n-3) to tetracosahexaenoate (24:6n-3), which is then converted to docosahexaenoate (DHA)(22:6n-3), an important lipid for nervous system function. It can also desaturate (11E)-octadecenoate (trans-vaccenoate) at carbon 6 generating (6Z,11E)-octadecadienoate. In addition to Delta-6 activity, this enzyme exhibits Delta-8 activity with slight biases toward n-3 fatty acyl-CoA substrates. This is Acyl-CoA 6-desaturase (FADS2) from Pongo abelii (Sumatran orangutan).